A 148-amino-acid chain; its full sequence is UPF0179 protein VNG_1401C (148 aa).

The protein belongs to the UPF0179 family.

This chain is UPF0179 protein VNG_1401C, found in Halobacterium salinarum (strain ATCC 700922 / JCM 11081 / NRC-1) (Halobacterium halobium).